The primary structure comprises 88 residues: Small ribosomal subunit protein bS16c (88 aa).

This sequence belongs to the bacterial ribosomal protein bS16 family.

Its subcellular location is the plastid. It is found in the chloroplast. In Sinapis alba (White mustard), this protein is Small ribosomal subunit protein bS16c.